The primary structure comprises 57 residues: MGEMKYVCISCNAEIAPREKSTKFPCPNCGEVEIVRCERCRKLNNPYKCPKCGFEGP.

4 consecutive short sequence motifs (c(P)XCG motif) follow at residues 8-12, 26-30, 37-41, and 49-53; these read CISCN, CPNCG, CERCR, and CPKCG. Zn(2+) is bound by residues Cys26 and Cys29. Zn(2+) contacts are provided by Cys49 and Cys52.

As to quaternary structure, monomer in solution.

Functionally, zinc-binding protein that binds only one zinc ion. The protein is Zinc finger protein MJ0458.1 of Methanocaldococcus jannaschii (strain ATCC 43067 / DSM 2661 / JAL-1 / JCM 10045 / NBRC 100440) (Methanococcus jannaschii).